The following is a 79-amino-acid chain: Acyl carrier protein (79 aa).

Positions E2–G77 constitute a Carrier domain. Residue S37 is modified to O-(pantetheine 4'-phosphoryl)serine.

Belongs to the acyl carrier protein (ACP) family. 4'-phosphopantetheine is transferred from CoA to a specific serine of apo-ACP by AcpS. This modification is essential for activity because fatty acids are bound in thioester linkage to the sulfhydryl of the prosthetic group.

The protein localises to the cytoplasm. Its pathway is lipid metabolism; fatty acid biosynthesis. Its function is as follows. Carrier of the growing fatty acid chain in fatty acid biosynthesis. This Bordetella parapertussis (strain 12822 / ATCC BAA-587 / NCTC 13253) protein is Acyl carrier protein.